Consider the following 452-residue polypeptide: Phosphoglucosamine mutase (452 aa).

The active-site Phosphoserine intermediate is the Ser-104. Positions 104, 246, 248, and 250 each coordinate Mg(2+). At Ser-104 the chain carries Phosphoserine.

It belongs to the phosphohexose mutase family. It depends on Mg(2+) as a cofactor. Post-translationally, activated by phosphorylation.

The catalysed reaction is alpha-D-glucosamine 1-phosphate = D-glucosamine 6-phosphate. Its function is as follows. Catalyzes the conversion of glucosamine-6-phosphate to glucosamine-1-phosphate. In Streptomyces coelicolor (strain ATCC BAA-471 / A3(2) / M145), this protein is Phosphoglucosamine mutase.